The chain runs to 524 residues: L-tyrosine:2-oxoglutarate aminotransferase atrD (524 aa).

This sequence belongs to the class-I pyridoxal-phosphate-dependent aminotransferase family. Requires pyridoxal 5'-phosphate as cofactor.

It carries out the reaction L-tyrosine + 2-oxoglutarate = 3-(4-hydroxyphenyl)pyruvate + L-glutamate. Its pathway is secondary metabolite biosynthesis. Functionally, the L-tyrosine:2-oxoglutarate aminotransferase atrD and the atromentin synthetase atrA catalyze consecutive steps to turn over L-tyrosine into atromentin, which represents the generic precursor molecule for the entire terphenylquinone and pulvinic acid family of pigments, which are widely distributed secondary metabolites in homobasidiomycetes. The first step is catalyzed by atrD which converts L-tyrosine in to 4-hydroxyphenylpyruvate (4-HPP). Adenylation of two 4-HPP monomers by the atrA adenylation (A) domain, ester bond formation between monomers and atrA, and symmetric C-C-bond formation between two monomers by atrA leads to atromentin. The chain is L-tyrosine:2-oxoglutarate aminotransferase atrD from Tapinella panuoides (Oyster rollrim mushroom).